The following is a 153-amino-acid chain: 17.5 kDa class I heat shock protein (153 aa).

In terms of domain architecture, sHSP spans 39 to 153; sequence ENSAFVNTRV…PDVKAIEISG (115 aa).

The protein belongs to the small heat shock protein (HSP20) family. As to quaternary structure, forms oligomeric structures.

It is found in the cytoplasm. The protein is 17.5 kDa class I heat shock protein (HSP17.5-M) of Glycine max (Soybean).